Consider the following 398-residue polypeptide: Dual-specificity RNA methyltransferase RlmN (398 aa).

Glutamate 119 serves as the catalytic Proton acceptor. Positions 125–364 (EGDRATLCVS…TIVRKTRGDD (240 aa)) constitute a Radical SAM core domain. Cysteine 132 and cysteine 369 form a disulfide bridge. [4Fe-4S] cluster-binding residues include cysteine 139, cysteine 143, and cysteine 146. Residues 193 to 194 (GE), serine 225, 247 to 249 (SLH), and asparagine 326 contribute to the S-adenosyl-L-methionine site. Cysteine 369 acts as the S-methylcysteine intermediate in catalysis.

The protein belongs to the radical SAM superfamily. RlmN family. The cofactor is [4Fe-4S] cluster.

The protein localises to the cytoplasm. The enzyme catalyses adenosine(2503) in 23S rRNA + 2 reduced [2Fe-2S]-[ferredoxin] + 2 S-adenosyl-L-methionine = 2-methyladenosine(2503) in 23S rRNA + 5'-deoxyadenosine + L-methionine + 2 oxidized [2Fe-2S]-[ferredoxin] + S-adenosyl-L-homocysteine. It catalyses the reaction adenosine(37) in tRNA + 2 reduced [2Fe-2S]-[ferredoxin] + 2 S-adenosyl-L-methionine = 2-methyladenosine(37) in tRNA + 5'-deoxyadenosine + L-methionine + 2 oxidized [2Fe-2S]-[ferredoxin] + S-adenosyl-L-homocysteine. Functionally, specifically methylates position 2 of adenine 2503 in 23S rRNA and position 2 of adenine 37 in tRNAs. m2A2503 modification seems to play a crucial role in the proofreading step occurring at the peptidyl transferase center and thus would serve to optimize ribosomal fidelity. The chain is Dual-specificity RNA methyltransferase RlmN from Yersinia enterocolitica serotype O:8 / biotype 1B (strain NCTC 13174 / 8081).